Here is a 2006-residue protein sequence, read N- to C-terminus: Sodium channel protein type 2 subunit alpha (2006 aa).

At Ser4 the chain carries Phosphoserine. Positions 28–61 are disordered; it reads RIAEEKAKRPKQERKDEDDENGPKPNSDLEAGKS. Residue Lys38 forms a Glycyl lysine isopeptide (Lys-Gly) (interchain with G-Cter in SUMO1) linkage. The stretch at 111–456 is one I repeat; sequence ILTPFNPIRK…QQMLEQLKKQ (346 aa). A helical transmembrane segment spans residues 130-148; that stretch reads LFNVLIMCTILTNCVFMTM. A helical transmembrane segment spans residues 156-176; the sequence is KNVEYTFTGIYTFESLIKILA. Residues 191–208 traverse the membrane as a helical segment; sequence WNWLDFTVITFAYVTEFV. A helical membrane pass occupies residues 215–231; it reads ALRTFRVLRALKTISVI. The helical transmembrane segment at 251–270 threads the bilayer; that stretch reads VMILTVFCLSVFALIGLQLF. Cys278 and Cys338 are joined by a disulfide. N-linked (GlcNAc...) asparagine glycans are attached at residues Asn285, Asn291, Asn297, Asn303, Asn308, and Asn340. The pore-forming intramembrane region spans 370 to 394; that stretch reads FSWAFLSLFRLMTQDFWENLYQLTL. The chain crosses the membrane as a helical span at residues 402–422; it reads MIFFVLVIFLGSFYLINLILA. Phosphoserine occurs at positions 468, 471, 484, 526, 528, 531, 553, 554, 558, 573, 576, 589, 610, 623, 687, 688, and 722. The interval 494-529 is disordered; the sequence is SSKSEKELKNRRKKKKQKEQAGEEEKEDAVRKSASE. Residues 511-529 are compositionally biased toward basic and acidic residues; sequence KEQAGEEEKEDAVRKSASE. The segment at 589-635 is disordered; sequence SENDFADDEHSTFEDNDSRRDSLFVPHRHGERRPSNVSQASRASRGI. The span at 596–610 shows a compositional bias: basic and acidic residues; the sequence is DEHSTFEDNDSRRDS. The stretch at 742–1014 is one II repeat; that stretch reads CCKPWLKVKH…QIAVGRMQKG (273 aa). The helical transmembrane segment at 761–779 threads the bilayer; the sequence is FVDLAITICIVLNTLFMAM. The helical transmembrane segment at 791–810 threads the bilayer; that stretch reads VLSVGNLVFTGIFTAEMFLK. The chain crosses the membrane as a helical span at residues 825–844; it reads NIFDGFIVSLSLMELGLANV. Residues 847–864 traverse the membrane as a helical segment; sequence LSVLRSFRLLRVFKLAKS. The helical transmembrane segment at 881-899 threads the bilayer; that stretch reads ALGNLTLVLAIIVFIFAVV. Cysteines 913 and 919 form a disulfide. The interval 918–919 is binds SCN2B; that stretch reads DC. The pore-forming intramembrane region spans 929–949; it reads FFHSFLIVFRVLCGEWIETMW. An intrachain disulfide couples Cys951 to Cys960. Residues 963–983 traverse the membrane as a helical segment; the sequence is VFMMVMVIGNLVVLNLFLALL. The tract at residues 1121–1167 is disordered; it reads EEFSSESDMEESKEKLNATSSSEGSTVDIGAPAEGEQPEAEPEESLE. A compositionally biased stretch (acidic residues) spans 1156-1167; sequence EQPEAEPEESLE. The III repeat unit spans residues 1191–1505; sequence KGKLWWNLRK…KKYYNAMKKL (315 aa). Residues 1211-1228 traverse the membrane as a helical segment; sequence FETFIVFMILLSSGALAF. The chain crosses the membrane as a helical span at residues 1242–1260; sequence MLEYADKVFTYIFILEMLL. Residues 1275 to 1293 traverse the membrane as a helical segment; that stretch reads WCWLDFLIVDVSLVSLTAN. The chain crosses the membrane as a helical span at residues 1302–1320; that stretch reads AIKSLRTLRALRPLRALSR. Residues 1338–1357 form a helical membrane-spanning segment; that stretch reads IMNVLLVCLIFWLIFSIMGV. The cysteines at positions 1367 and 1387 are disulfide-linked. The pore-forming intramembrane region spans 1410-1431; the sequence is GLGYLSLLQVATFKGWMDIMYA. Residues 1449–1470 form a helical membrane-spanning segment; it reads YMYLYFVIFIIFGSFFTLNLFI. Ser1507 carries the phosphoserine modification. The IV repeat unit spans residues 1514-1812; the sequence is IPRPANKFQG…WEKFDPDATQ (299 aa). A helical membrane pass occupies residues 1534–1551; it reads FDISIMILICLNMVTMMV. Residues 1563-1581 traverse the membrane as a helical segment; the sequence is ILYWINLVFIVLFTGECVL. Residues 1594-1611 form a helical membrane-spanning segment; the sequence is GWNIFDFVVVILSIVGMF. A helical transmembrane segment spans residues 1625 to 1641; sequence LFRVIRLARIGRILRLI. The chain crosses the membrane as a helical span at residues 1661–1678; sequence LFNIGLLLFLVMFIYAIF. The segment at residues 1701–1723 is an intramembrane region (pore-forming); it reads FGNSMICLFQITTSAGWDGLLAP. Cys1732 and Cys1747 form a disulfide bridge. A helical membrane pass occupies residues 1754-1776; it reads IFFFVSYIIISFLVVVNMYIAVI. The 30-residue stretch at 1906-1935 folds into the IQ domain; the sequence is EEVSAIVIQRAYRRYLLKQKVKKVSSIYKK. At Ser1931 the chain carries Phosphoserine. Over residues 1934 to 1965 the composition is skewed to basic and acidic residues; the sequence is KKDKGKEDEGTPIKEDIITDKLNENSTPEKTD. The interval 1934 to 2006 is disordered; it reads KKDKGKEDEG…KGKDIRESKK (73 aa). A phosphothreonine mark is found at Thr1944, Thr1964, and Thr1967. Ser1972 is subject to Phosphoserine. Residues 1980-2006 are compositionally biased toward basic and acidic residues; it reads TKPEKEKFEKDKSEKEDKGKDIRESKK.

Belongs to the sodium channel (TC 1.A.1.10) family. Nav1.2/SCN2A subfamily. Heterooligomer of a large alpha subunit and a smaller beta subunit. Heterooligomer with SCN2B or SCN4B; disulfide-linked. Interacts with NEDD4L. Interacts with CALM. Interacts with TMEM233. In terms of processing, sumoylated at Lys-38. Sumoylation is induced by hypoxia, increases voltage-gated sodium current and mediates the early response to acute hypoxia in neurons. Sumoylated SCN2A is located at the cell membrane. In terms of tissue distribution, expressed in brain (at protein level). Detected in hippocampus, cortex and brain stem.

Its subcellular location is the cell membrane. It carries out the reaction Na(+)(in) = Na(+)(out). In terms of biological role, mediates the voltage-dependent sodium ion permeability of excitable membranes. Assuming opened or closed conformations in response to the voltage difference across the membrane, the protein forms a sodium-selective channel through which Na(+) ions may pass in accordance with their electrochemical gradient. Implicated in the regulation of hippocampal replay occurring within sharp wave ripples (SPW-R) important for memory. The chain is Sodium channel protein type 2 subunit alpha from Mus musculus (Mouse).